We begin with the raw amino-acid sequence, 645 residues long: Alkyldihydroxyacetonephosphate synthase, peroxisomal (645 aa).

A compositionally biased stretch (low complexity) spans 1-10 (MAEAAAGEAG). Residues 1–45 (MAEAAAGEAGASERDPDAGRARRRLRVLSGHLLGRPQEAPSTNEC) constitute a peroxisome transit peptide. The tract at residues 1–72 (MAEAAAGEAG…AAPESGTIPK (72 aa)) is disordered. The segment covering 11 to 20 (ASERDPDAGR) has biased composition (basic and acidic residues). Over residues 50–69 (AASAAGASPAATPAAPESGT) the composition is skewed to low complexity. A phosphoserine mark is found at Ser52 and Ser57. The residue at position 61 (Thr61) is a Phosphothreonine. Lys89 bears the N6-acetyllysine mark. The FAD-binding PCMH-type domain occupies 189-371 (FERIPDIVVW…TEATIKIRPT (183 aa)). Residues 221-227 (PIGGGTS), 290-296 (DSLEFST), and 303-306 (TRAS) contribute to the FAD site. Lys334 carries the N6-acetyllysine modification. Position 355–361 (355–361 (EGTLGVI)) interacts with FAD. Residue Arg502 coordinates substrate. The active-site Proton donor/acceptor is the Tyr565. Important for enzyme activity stretches follow at residues 602 to 604 (HHH) and 641 to 645 (NRNLL).

It belongs to the FAD-binding oxidoreductase/transferase type 4 family. In terms of assembly, homodimer. The cofactor is FAD.

Its subcellular location is the peroxisome membrane. The protein resides in the peroxisome. The catalysed reaction is a long chain fatty alcohol + a 1-acylglycerone 3-phosphate = a 1-O-alkylglycerone 3-phosphate + a long-chain fatty acid + H(+). It carries out the reaction hexadecan-1-ol + 1-hexadecanoylglycerone 3-phosphate = 1-O-hexadecylglycerone 3-phosphate + hexadecanoate + H(+). It catalyses the reaction 1-hexadecanoylglycerone 3-phosphate + a long-chain fatty acid = a 1-acylglycerone 3-phosphate + hexadecanoate. The protein operates within glycerolipid metabolism; ether lipid biosynthesis. Its function is as follows. Catalyzes the exchange of the acyl chain in acyl-dihydroxyacetonephosphate (acyl-DHAP) for a long chain fatty alcohol, yielding the first ether linked intermediate, i.e. alkyl-dihydroxyacetonephosphate (alkyl-DHAP), in the pathway of ether lipid biosynthesis. The chain is Alkyldihydroxyacetonephosphate synthase, peroxisomal (Agps) from Mus musculus (Mouse).